The primary structure comprises 75 residues: Exodeoxyribonuclease 7 small subunit (75 aa).

The protein belongs to the XseB family. Heterooligomer composed of large and small subunits.

It is found in the cytoplasm. The catalysed reaction is Exonucleolytic cleavage in either 5'- to 3'- or 3'- to 5'-direction to yield nucleoside 5'-phosphates.. Functionally, bidirectionally degrades single-stranded DNA into large acid-insoluble oligonucleotides, which are then degraded further into small acid-soluble oligonucleotides. The polypeptide is Exodeoxyribonuclease 7 small subunit (Chlamydia felis (strain Fe/C-56) (Chlamydophila felis)).